A 485-amino-acid polypeptide reads, in one-letter code: Envelope glycoprotein C (485 aa).

Residues methionine 1–alanine 32 form the signal peptide. Residues threonine 28 to asparagine 72 are compositionally biased toward low complexity. Residues threonine 28 to asparagine 88 are disordered. Residues serine 33–proline 444 lie on the Virion surface side of the membrane. N-linked (GlcNAc...) asparagine; by host glycans are attached at residues asparagine 60, asparagine 61, asparagine 66, asparagine 67, asparagine 72, asparagine 108, asparagine 116, asparagine 147, asparagine 220, asparagine 225, and asparagine 286. Residues cysteine 92 and cysteine 109 are joined by a disulfide bond. One can recognise an Ig-like domain in the interval proline 237 to serine 330. 3 disulfides stabilise this stretch: cysteine 256/cysteine 318, cysteine 357/cysteine 416, and cysteine 361/cysteine 390. A helical transmembrane segment spans residues valine 445–valine 468. Residues cysteine 469–phenylalanine 485 lie on the Cytoplasmic side of the membrane.

It belongs to the herpesviridae glycoprotein C family. In terms of assembly, interacts with host complement component C3; this interaction inhibits host immune response by disregulating complement cascade.

Its subcellular location is the virion membrane. In terms of biological role, essential for the initial attachment to heparan sulfate moieties of the host cell surface proteoglycans. Also plays a role in host immune evasion by inhibiting the host complement cascade activation. The polypeptide is Envelope glycoprotein C (gC) (Equine herpesvirus 4 (strain 1942) (EHV-4)).